The chain runs to 349 residues: N-acetyltaurine hydrolase (349 aa).

Residues histidine 26, histidine 28, glutamate 169, histidine 201, histidine 230, and aspartate 298 each coordinate a divalent metal cation.

The protein belongs to the metallo-dependent hydrolases superfamily. Phosphotriesterase family. It depends on a divalent metal cation as a cofactor.

Its subcellular location is the cytoplasm. It localises to the cytosol. It catalyses the reaction N-acetyltaurine + H2O = taurine + acetate. The catalysed reaction is N-propanoyltaurine + H2O = propanoate + taurine. It carries out the reaction N-acetyl-L-methionine + H2O = L-methionine + acetate. The enzyme catalyses N-acetyl-L-isoleucine + H2O = L-isoleucine + acetate. It catalyses the reaction N-acetyl-L-leucine + H2O = L-leucine + acetate. The catalysed reaction is N-acetyl-L-valine + H2O = L-valine + acetate. Functionally, N-acetyltaurine hydrolase that catalyzes the hydrolysis of N-acetyltaurine into taurine and acetate. PTER also acts on other N-acetyl amino acids (Met, Ile, Leu, Val) and N-propionyltaurine, but at lower rates. The protein is N-acetyltaurine hydrolase (pter) of Danio rerio (Zebrafish).